The following is a 72-amino-acid chain: MSKDDVIQMQGEVVENLPNATFRVKLENGHVVLGHISGKMRMHYIRILPGDKVTVELTPYDLSRARIVFRAK.

The S1-like domain occupies 1–72; it reads MSKDDVIQMQ…SRARIVFRAK (72 aa).

This sequence belongs to the IF-1 family. In terms of assembly, component of the 30S ribosomal translation pre-initiation complex which assembles on the 30S ribosome in the order IF-2 and IF-3, IF-1 and N-formylmethionyl-tRNA(fMet); mRNA recruitment can occur at any time during PIC assembly.

It is found in the cytoplasm. Functionally, one of the essential components for the initiation of protein synthesis. Stabilizes the binding of IF-2 and IF-3 on the 30S subunit to which N-formylmethionyl-tRNA(fMet) subsequently binds. Helps modulate mRNA selection, yielding the 30S pre-initiation complex (PIC). Upon addition of the 50S ribosomal subunit IF-1, IF-2 and IF-3 are released leaving the mature 70S translation initiation complex. The chain is Translation initiation factor IF-1 from Albidiferax ferrireducens (strain ATCC BAA-621 / DSM 15236 / T118) (Rhodoferax ferrireducens).